We begin with the raw amino-acid sequence, 1063 residues long: Structural polyprotein (1063 aa).

The interval 1–131 (MASTTPITME…LGPPTNPFQA (131 aa)) is disordered. The interval 30 to 69 (GASQSRRPRPPRQRDSSTTGDDSGRDSGGPRRRRGNRGRG) is human C1QBP/SF2P32-binding. Serine 46 carries the phosphoserine; by host modification. A compositionally biased stretch (basic residues) spans 59-69 (PRRRRGNRGRG). The span at 70–87 (QRRDWSRAPPPPEERQET) shows a compositional bias: basic and acidic residues. The span at 93–107 (APKPSRAPPQQPQPP) shows a compositional bias: pro residues. A disulfide bridge connects residues cysteine 153 and cysteine 197. Positions 279 to 300 (GAPQAFLAGLLLAAVAVGTARA) are functions as E2 signal peptide. At 301-534 (GLQPRADMAA…LWLATANALS (234 aa)) the chain is on the extracellular side. N-linked (GlcNAc...) asparagine; by host glycosylation is found at asparagine 353, asparagine 371, asparagine 410, and asparagine 429. The helical transmembrane segment at 535-555 (LDHALAAFVLLVPWVLIFMVC) threads the bilayer. Residues 556–582 (RRTCRRRGAAAALTAVVLQGYNPPAYG) are Cytoplasmic-facing. The interval 563-582 (GAAAALTAVVLQGYNPPAYG) is functions as E1 signal peptide. At 583–1028 (EEAFTYLCTA…QTWAEWAAAH (446 aa)) the chain is on the extracellular side. Disulfide bonds link cysteine 590/cysteine 595, cysteine 619/cysteine 824, cysteine 641/cysteine 653, cysteine 699/cysteine 712, cysteine 758/cysteine 767, cysteine 807/cysteine 817, cysteine 931/cysteine 934, and cysteine 950/cysteine 983. N-linked (GlcNAc...) asparagine; by host glycosylation is present at asparagine 658. Residues asparagine 670 and alanine 671 each coordinate Ca(2+). Ca(2+) is bound by residues aspartate 718 and threonine 719. N-linked (GlcNAc...) asparagine; by host glycosylation is found at asparagine 759 and asparagine 791. 2 O-linked (GalNAc...) threonine; by host glycosylation sites follow: threonine 1011 and threonine 1012. A helical membrane pass occupies residues 1029–1049 (WWQLTLGAICALLLAGLLACC). Topologically, residues 1050 to 1063 (AKCLYYLRGAIAPR) are extracellular.

In terms of assembly, homodimer; further assembles into homooligomer. Interacts with human C1QBP. Interacts (via N-terminus) with protease/methyltransferase p150. Heterodimer with spike glycoprotein E2. As to quaternary structure, heterodimer with spike glycoprotein E1. Structural polyprotein: Specific enzymatic cleavages in vivo yield mature proteins. Two signal peptidase-mediated cleavages within the polyprotein produce the structural proteins capsid, E2, and E1. The E2 signal peptide remains attached to the C-terminus of the capsid protein after cleavage by the signal peptidase. Another signal peptide at E2 C-terminus directs E1 to the ER, with a similar mechanism. In terms of processing, contains three N-linked oligosaccharides. Post-translationally, capsid is phosphorylated on Ser-46 by host. This phosphorylation negatively regulates capsid protein RNA-binding activity. Dephosphorylated by human PP1A.

Its subcellular location is the virion. It localises to the host cytoplasm. It is found in the host mitochondrion. The protein localises to the virion membrane. The protein resides in the host Golgi apparatus membrane. Functionally, capsid protein interacts with genomic RNA and assembles into icosahedric core particles 65-70 nm in diameter. The resulting nucleocapsid eventually associates with the cytoplasmic domain of E2 at the cell membrane, leading to budding and formation of mature virions from host Golgi membranes. Phosphorylation negatively regulates RNA-binding activity, possibly delaying virion assembly during the viral replication phase. Capsid protein dimerizes and becomes disulfide-linked in the virion. Modulates genomic RNA replication. Modulates subgenomic RNA synthesis by interacting with human C1QBP/SF2P32. Induces both perinuclear clustering of mitochondria and the formation of electron-dense intermitochondrial plaques, both hallmarks of rubella virus infected cells. Induces apoptosis when expressed in transfected cells. Responsible for viral attachment to target host cell, by binding to the cell receptor. Its transport to the plasma membrane depends on interaction with E1 protein. The surface glycoproteins display an irregular helical organization and a pseudo-tetrameric inner nucleocapsid arrangement. In terms of biological role, class II viral fusion protein. Fusion activity is inactive as long as E1 is bound to E2 in mature virion. After virus attachment to target cell and clathrin-mediated endocytosis, acidification of the endosome would induce dissociation of E1/E2 heterodimer and concomitant trimerization of the E1 subunits. This E1 homotrimer is fusion active, and promotes release of viral nucleocapsid in cytoplasm after endosome and viral membrane fusion. The cytoplasmic tail of spike glycoprotein E1 modulates virus release. The surface glycoproteins display an irregular helical organization and a pseudo-tetrameric inner nucleocapsid arrangement. This is Structural polyprotein from Homo sapiens (Human).